A 590-amino-acid polypeptide reads, in one-letter code: Glutamine--tRNA ligase (590 aa).

A 'HIGH' region motif is present at residues 55–65; sequence PEPNGYLHIGH. ATP-binding positions include 56 to 58 and 62 to 68; these read EPN and HIGHAKS. The L-glutamine site is built by Asp93 and Tyr238. ATP is bound by residues Thr257 and 292-293; that span reads RL. A 'KMSKS' region motif is present at residues 299–303; it reads ITSKR.

It belongs to the class-I aminoacyl-tRNA synthetase family. Monomer.

It is found in the cytoplasm. The catalysed reaction is tRNA(Gln) + L-glutamine + ATP = L-glutaminyl-tRNA(Gln) + AMP + diphosphate. This chain is Glutamine--tRNA ligase, found in Polynucleobacter asymbioticus (strain DSM 18221 / CIP 109841 / QLW-P1DMWA-1) (Polynucleobacter necessarius subsp. asymbioticus).